A 347-amino-acid chain; its full sequence is NHL repeat-containing protein 3 (347 aa).

Positions methionine 1–cysteine 25 are cleaved as a signal peptide. N-linked (GlcNAc...) asparagine glycosylation occurs at asparagine 32. One copy of the NHL 1 repeat lies at arginine 47–aspartate 93. Asparagine 101 carries N-linked (GlcNAc...) asparagine glycosylation. 2 NHL repeats span residues threonine 150–aspartate 196 and leucine 200–aspartate 243. Asparagine 206 and asparagine 278 each carry an N-linked (GlcNAc...) asparagine glycan. The NHL 4 repeat unit spans residues glycine 294 to leucine 338.

It localises to the secreted. This is NHL repeat-containing protein 3 (NHLRC3) from Homo sapiens (Human).